A 111-amino-acid chain; its full sequence is Small ribosomal subunit protein uS15c (111 aa).

It belongs to the universal ribosomal protein uS15 family. As to quaternary structure, part of the 30S ribosomal subunit.

It is found in the plastid. The protein localises to the chloroplast. The polypeptide is Small ribosomal subunit protein uS15c (rps15) (Staurastrum punctulatum (Green alga)).